Here is a 91-residue protein sequence, read N- to C-terminus: Early E3B 10.4 kDa protein (91 aa).

Positions 1–22 (MIPRNFFFTILICAFNVCATFT) are cleaved as a signal peptide. Residues 23 to 34 (AVATASPDCIGP) are Lumenal-facing. The helical transmembrane segment at 35–60 (FASYALFAFVTCICVCSIVCLVINFF) threads the bilayer. The Cytoplasmic portion of the chain corresponds to 61 to 91 (QLVDWIFVRIAYLRHHPEYRNQNVAALLRLI).

This sequence belongs to the adenoviridae E3B family.

The protein localises to the host endoplasmic reticulum membrane. Down-regulates the EGF receptor. The chain is Early E3B 10.4 kDa protein from Homo sapiens (Human).